The primary structure comprises 526 residues: GMP synthase [glutamine-hydrolyzing] (526 aa).

Residues 10–208 (RILILDFGSQ…VVDLCGCEKL (199 aa)) enclose the Glutamine amidotransferase type-1 domain. Cysteine 87 serves as the catalytic Nucleophile. Residues histidine 182 and glutamate 184 contribute to the active site. The 193-residue stretch at 209-401 (WTTENIIDDS…LGLPSDMVYR (193 aa)) folds into the GMPS ATP-PPase domain. An ATP-binding site is contributed by 236–242 (SGGVDSS).

In terms of assembly, homodimer.

The enzyme catalyses XMP + L-glutamine + ATP + H2O = GMP + L-glutamate + AMP + diphosphate + 2 H(+). The protein operates within purine metabolism; GMP biosynthesis; GMP from XMP (L-Gln route): step 1/1. Its function is as follows. Catalyzes the synthesis of GMP from XMP. The protein is GMP synthase [glutamine-hydrolyzing] of Hydrogenovibrio crunogenus (strain DSM 25203 / XCL-2) (Thiomicrospira crunogena).